The sequence spans 124 residues: Small ribosomal subunit protein uS13 (124 aa).

A disordered region spans residues 95 to 124 (GLPVRGQRTKTNARTRKGPKRTIAGKKKAR).

The protein belongs to the universal ribosomal protein uS13 family. In terms of assembly, part of the 30S ribosomal subunit. Forms a loose heterodimer with protein S19. Forms two bridges to the 50S subunit in the 70S ribosome.

In terms of biological role, located at the top of the head of the 30S subunit, it contacts several helices of the 16S rRNA. In the 70S ribosome it contacts the 23S rRNA (bridge B1a) and protein L5 of the 50S subunit (bridge B1b), connecting the 2 subunits; these bridges are implicated in subunit movement. Contacts the tRNAs in the A and P-sites. This Mycobacteroides abscessus (strain ATCC 19977 / DSM 44196 / CCUG 20993 / CIP 104536 / JCM 13569 / NCTC 13031 / TMC 1543 / L948) (Mycobacterium abscessus) protein is Small ribosomal subunit protein uS13.